A 738-amino-acid polypeptide reads, in one-letter code: Multifunctional procollagen lysine hydroxylase and glycosyltransferase LH3 (738 aa).

The first 24 residues, 1-24 (MTSSGPGPRFLLLLPLLLPPAASA), serve as a signal peptide directing secretion. A required for glycosyltransferase activity region spans residues 25-290 (SDRPRGRDPV…FCNQDRRTLP (266 aa)). 44 to 46 (VAT) is a UDP binding site. N-linked (GlcNAc...) asparagine glycosylation occurs at N63. Positions 112, 115, and 253 each coordinate Mn(2+). 112 to 114 (DSY) serves as a coordination point for UDP. Position 256–259 (256–259 (GPTK)) interacts with UDP. 2 cysteine pairs are disulfide-bonded: C279-C282 and C379-C385. Residues 295–520 (PPRVFLAVFV…EFGRLLATSR (226 aa)) are accessory region. The N-linked (GlcNAc...) asparagine glycan is linked to N548. A disulfide bridge connects residues C563 and C698. 2-oxoglutarate is bound by residues R599 and Y656. In terms of domain architecture, Fe2OG dioxygenase spans 647–738 (RAVMNFVVRY…RYIMVSFVDP (92 aa)). Positions 667 and 669 each coordinate Fe cation. The tract at residues 672–715 (TFTLNVALNHKGLDYEGGGCRFLRYDCVISSPRKGWALLHPGRL) is important for dimerization. A 2-oxoglutarate-binding site is contributed by N676. H719 contacts Fe cation. R729 contacts 2-oxoglutarate.

In terms of assembly, homodimer. Requires Fe(2+) as cofactor. L-ascorbate is required as a cofactor. Mn(2+) serves as cofactor.

It localises to the rough endoplasmic reticulum. The protein localises to the endoplasmic reticulum lumen. It is found in the endoplasmic reticulum membrane. Its subcellular location is the secreted. The protein resides in the extracellular space. It carries out the reaction L-lysyl-[collagen] + 2-oxoglutarate + O2 = (5R)-5-hydroxy-L-lysyl-[collagen] + succinate + CO2. The catalysed reaction is (5R)-5-hydroxy-L-lysyl-[collagen] + UDP-alpha-D-galactose = (5R)-5-O-(beta-D-galactosyl)-5-hydroxy-L-lysyl-[collagen] + UDP + H(+). It catalyses the reaction (5R)-5-O-(beta-D-galactosyl)-5-hydroxy-L-lysyl-[collagen] + UDP-alpha-D-glucose = (5R)-5-O-[alpha-D-glucosyl-(1-&gt;2)-beta-D-galactosyl]-5-hydroxy-L-lysyl-[collagen] + UDP + H(+). Its function is as follows. Multifunctional enzyme that catalyzes a series of post-translational modifications on Lys residues in procollagen. Plays a redundant role in catalyzing the formation of hydroxylysine residues in -Xaa-Lys-Gly- sequences in collagens. Plays a redundant role in catalyzing the transfer of galactose onto hydroxylysine groups, giving rise to galactosyl 5-hydroxylysine. Has an essential role by catalyzing the subsequent transfer of glucose moieties, giving rise to 1,2-glucosylgalactosyl-5-hydroxylysine residues. Catalyzes hydroxylation and glycosylation of Lys residues in the MBL1 collagen-like domain, giving rise to hydroxylysine and 1,2-glucosylgalactosyl-5-hydroxylysine residues. Catalyzes hydroxylation and glycosylation of Lys residues in the ADIPOQ collagen-like domain, giving rise to hydroxylysine and 1,2-glucosylgalactosyl-5-hydroxylysine residues. Essential for normal biosynthesis and secretion of type IV collagens. Essential for normal formation of basement membranes. The polypeptide is Multifunctional procollagen lysine hydroxylase and glycosyltransferase LH3 (PLOD3) (Pongo abelii (Sumatran orangutan)).